Reading from the N-terminus, the 449-residue chain is AP-4 complex subunit mu-1 (449 aa).

Residues 184–448 (KNEVFLDVVE…LSHSNAYVIR (265 aa)) enclose the MHD domain.

The protein belongs to the adaptor complexes medium subunit family. In terms of assembly, adaptor protein complex 4 (AP-4) is a heterotetramer composed of two large adaptins (epsilon-type subunit AP4E1 and beta-type subunit AP4B1), a medium adaptin (mu-type subunit AP4M1) and a small adaptin (sigma-type AP4S1). Interacts with tyrosine-based sorting signals on the cytoplasmic tail of cargo proteins such as APP, ATG9A, LAMP2 and NAGPA. Interacts with the C-terminal domain of GRID2. Interacts with GRIA1 and GRIA2; the interaction is indirect via CACNG3. Interacts with CACNG3; CACNG3 associates GRIA1 and GRIA2 with the adaptor protein complex 4 (AP-4) to target them to the somatodendritic compartment of neurons. Interacts with HOOK1 and HOOK2; the interactions are direct, mediate the interaction between FTS-Hook-FHIP (FHF) complex and AP-4 and the perinuclear distribution of AP-4.

Its subcellular location is the golgi apparatus. The protein resides in the trans-Golgi network membrane. It localises to the early endosome. Functionally, component of the adaptor protein complex 4 (AP-4). Adaptor protein complexes are vesicle coat components involved both in vesicle formation and cargo selection. They control the vesicular transport of proteins in different trafficking pathways. AP-4 forms a non clathrin-associated coat on vesicles departing the trans-Golgi network (TGN) and may be involved in the targeting of proteins from the trans-Golgi network (TGN) to the endosomal-lysosomal system. It is also involved in protein sorting to the basolateral membrane in epithelial cells and the proper asymmetric localization of somatodendritic proteins in neurons. Within AP-4, the mu-type subunit AP4M1 is directly involved in the recognition and binding of tyrosine-based sorting signals found in the cytoplasmic part of cargos. The adaptor protein complex 4 (AP-4) may also recognize other types of sorting signal. The sequence is that of AP-4 complex subunit mu-1 from Mus musculus (Mouse).